The primary structure comprises 114 residues: Large ribosomal subunit protein bL19 (114 aa).

The protein belongs to the bacterial ribosomal protein bL19 family.

In terms of biological role, this protein is located at the 30S-50S ribosomal subunit interface and may play a role in the structure and function of the aminoacyl-tRNA binding site. In Heliobacterium modesticaldum (strain ATCC 51547 / Ice1), this protein is Large ribosomal subunit protein bL19.